Here is a 120-residue protein sequence, read N- to C-terminus: MHILDSLDAASLRSDVPEFRAGDNLKVHVNIIEGNRSRVQVFQGFVLGRQGDGVRETFTVRKVSFGVGVERTFPVHSPIIEKIEVVTRGDVRRAKLYYMRDLRGKAAKIKEKRDNAPTKK.

This sequence belongs to the bacterial ribosomal protein bL19 family.

This protein is located at the 30S-50S ribosomal subunit interface and may play a role in the structure and function of the aminoacyl-tRNA binding site. This chain is Large ribosomal subunit protein bL19, found in Renibacterium salmoninarum (strain ATCC 33209 / DSM 20767 / JCM 11484 / NBRC 15589 / NCIMB 2235).